A 255-amino-acid polypeptide reads, in one-letter code: Octanoyltransferase (255 aa).

A disordered region spans residues 1–27 (MPPASDAHAAPDAAASTSASPQSCAAP). Residues 59-240 (PDTGDEIWVV…RLIANLDGAT (182 aa)) form the BPL/LPL catalytic domain. Substrate-binding positions include 99 to 106 (RGGQITYH), 171 to 173 (ALG), and 184 to 186 (GLS). The active-site Acyl-thioester intermediate is Cys-202.

It belongs to the LipB family.

Its subcellular location is the cytoplasm. The enzyme catalyses octanoyl-[ACP] + L-lysyl-[protein] = N(6)-octanoyl-L-lysyl-[protein] + holo-[ACP] + H(+). It participates in protein modification; protein lipoylation via endogenous pathway; protein N(6)-(lipoyl)lysine from octanoyl-[acyl-carrier-protein]: step 1/2. Catalyzes the transfer of endogenously produced octanoic acid from octanoyl-acyl-carrier-protein onto the lipoyl domains of lipoate-dependent enzymes. Lipoyl-ACP can also act as a substrate although octanoyl-ACP is likely to be the physiological substrate. This Burkholderia thailandensis (strain ATCC 700388 / DSM 13276 / CCUG 48851 / CIP 106301 / E264) protein is Octanoyltransferase.